The chain runs to 930 residues: Dual serine/threonine and tyrosine protein kinase (930 aa).

A coiled-coil region spans residues 383–428 (RKENELYESLMNIANRKQEEMKDMIIETLSNMKEELLEDAANMEFK). The 255-residue stretch at 653–907 (PKLGRELGRG…PLLGIVQPML (255 aa)) folds into the Protein kinase domain. ATP is bound by residues 659–667 (LGRGQYGVV) and Lys-682. Asp-778 functions as the Proton acceptor in the catalytic mechanism.

Belongs to the protein kinase superfamily. Ser/Thr protein kinase family. Widely expressed with the highest expression in brain and ovary.

The protein resides in the cytoplasm. It localises to the cell membrane. The protein localises to the apical cell membrane. Its subcellular location is the basolateral cell membrane. It is found in the cell junction. The catalysed reaction is L-seryl-[protein] + ATP = O-phospho-L-seryl-[protein] + ADP + H(+). The enzyme catalyses L-threonyl-[protein] + ATP = O-phospho-L-threonyl-[protein] + ADP + H(+). It catalyses the reaction L-tyrosyl-[protein] + ATP = O-phospho-L-tyrosyl-[protein] + ADP + H(+). Its function is as follows. May act as a positive regulator of ERK phosphorylation downstream of fibroblast growth factor-receptor activation. May induce both caspase-dependent apoptosis and caspase-independent cell death. The protein is Dual serine/threonine and tyrosine protein kinase (DSTYK) of Gallus gallus (Chicken).